The following is a 101-amino-acid chain: Integration host factor subunit beta (101 aa).

The interval 57-77 (PARAGRNPRTGAHVPVDQKSV) is disordered.

Belongs to the bacterial histone-like protein family. Heterodimer of an alpha and a beta chain.

Functionally, this protein is one of the two subunits of integration host factor, a specific DNA-binding protein that functions in genetic recombination as well as in transcriptional and translational control. The sequence is that of Integration host factor subunit beta from Rhodopseudomonas palustris (strain HaA2).